The following is a 256-amino-acid chain: Non-homologous end joining protein Ku 2 (256 aa).

The Ku domain occupies 13-184; that stretch reads FADTDVAVKL…SLELQESPVS (172 aa).

It belongs to the prokaryotic Ku family. Homodimer. Interacts with LigD.

In terms of biological role, with LigD forms a non-homologous end joining (NHEJ) DNA repair enzyme, which repairs dsDNA breaks with reduced fidelity. Binds linear dsDNA with 5'- and 3'- overhangs but not closed circular dsDNA nor ssDNA. Recruits and stimulates the ligase activity of LigD. In Geotalea uraniireducens (strain Rf4) (Geobacter uraniireducens), this protein is Non-homologous end joining protein Ku 2.